Reading from the N-terminus, the 322-residue chain is Ribokinase (322 aa).

Substrate contacts are provided by residues 25–27 (MTD), 53–57 (GKGAN), and E154. ATP is bound by residues N199, 235–240 (TLGAEG), and T256. K(+) is bound by residues D263 and T265. Residues 268–269 (GD) and N295 contribute to the ATP site. Residue D269 participates in substrate binding. D269 (proton acceptor) is an active-site residue. S301, A304, G306, and S310 together coordinate K(+).

Belongs to the carbohydrate kinase PfkB family. Ribokinase subfamily. Homodimer. Mg(2+) serves as cofactor.

It is found in the cytoplasm. Its subcellular location is the nucleus. It catalyses the reaction D-ribose + ATP = D-ribose 5-phosphate + ADP + H(+). It participates in carbohydrate metabolism; D-ribose degradation; D-ribose 5-phosphate from beta-D-ribopyranose: step 2/2. Activated by a monovalent cation that binds near, but not in, the active site. The most likely occupant of the site in vivo is potassium. Ion binding induces a conformational change that may alter substrate affinity. Competitively inhibited by phosphonoacetic acid, etidronate, 2-carboxethylphosphonic acid, N-(phosphonomethyl)glycine, N-(phosphonomethyl)iminodiacetic acid and clodronate. Catalyzes the phosphorylation of ribose at O-5 in a reaction requiring ATP and magnesium. The resulting D-ribose-5-phosphate can then be used either for sythesis of nucleotides, histidine, and tryptophan, or as a component of the pentose phosphate pathway. This chain is Ribokinase, found in Homo sapiens (Human).